The primary structure comprises 193 residues: Phosphoheptose isomerase (193 aa).

The 157-residue stretch at 37–193 folds into the SIS domain; sequence LADSFKAGGK…MLIEKEMAKG (157 aa). 52–54 is a binding site for substrate; that stretch reads NGG. The Zn(2+) site is built by histidine 61 and glutamate 65. Substrate contacts are provided by residues glutamate 65, 93-94, 119-121, serine 124, and glutamine 172; these read ND and STS. Positions 172 and 180 each coordinate Zn(2+).

This sequence belongs to the SIS family. GmhA subfamily. As to quaternary structure, homotetramer. Zn(2+) serves as cofactor.

The protein localises to the cytoplasm. The enzyme catalyses 2 D-sedoheptulose 7-phosphate = D-glycero-alpha-D-manno-heptose 7-phosphate + D-glycero-beta-D-manno-heptose 7-phosphate. Its pathway is carbohydrate biosynthesis; D-glycero-D-manno-heptose 7-phosphate biosynthesis; D-glycero-alpha-D-manno-heptose 7-phosphate and D-glycero-beta-D-manno-heptose 7-phosphate from sedoheptulose 7-phosphate: step 1/1. Its function is as follows. Catalyzes the isomerization of sedoheptulose 7-phosphate in D-glycero-D-manno-heptose 7-phosphate. The protein is Phosphoheptose isomerase of Klebsiella pneumoniae subsp. pneumoniae (strain ATCC 700721 / MGH 78578).